The following is a 236-amino-acid chain: Methylosome subunit pICln (236 aa).

Serine 2 is modified (N-acetylserine). A disordered region spans residues 88-109 (EESKEPPSDEDEEDNDDIEPIS). Serine 95, serine 143, serine 192, serine 194, serine 197, and serine 209 each carry phosphoserine. Residues 95 to 107 (SDEDEEDNDDIEP) show a composition bias toward acidic residues. A Phosphothreonine modification is found at threonine 222.

Belongs to the pICln (TC 1.A.47) family. As to quaternary structure, component of the methylosome, a 20S complex containing at least PRMT5/SKB1, WDR77/MEP50 and CLNS1A/pICln. May mediate SNRPD1 and SNRPD3 methylation. Forms a 6S pICln-Sm complex composed of CLNS1A/pICln, SNRPD1, SNRPD2, SNRPE, SNRPF and SNRPG; ring-like structure where CLNS1A/pICln mimics additional Sm proteins and which is unable to assemble into the core snRNP. Interacts with LSM10 and LSM11.

The protein localises to the cytoplasm. It is found in the cytosol. It localises to the nucleus. Its subcellular location is the cytoskeleton. Its function is as follows. Involved in both the assembly of spliceosomal snRNPs and the methylation of Sm proteins. Chaperone that regulates the assembly of spliceosomal U1, U2, U4 and U5 small nuclear ribonucleoproteins (snRNPs), the building blocks of the spliceosome, and thereby plays an important role in the splicing of cellular pre-mRNAs. Most spliceosomal snRNPs contain a common set of Sm proteins SNRPB, SNRPD1, SNRPD2, SNRPD3, SNRPE, SNRPF and SNRPG that assemble in a heptameric protein ring on the Sm site of the small nuclear RNA to form the core snRNP (Sm core). In the cytosol, the Sm proteins SNRPD1, SNRPD2, SNRPE, SNRPF and SNRPG are trapped in an inactive 6S pICln-Sm complex by the chaperone CLNS1A that controls the assembly of the core snRNP. Dissociation by the SMN complex of CLNS1A from the trapped Sm proteins and their transfer to an SMN-Sm complex triggers the assembly of core snRNPs and their transport to the nucleus. This chain is Methylosome subunit pICln (Clns1a), found in Mus musculus (Mouse).